The chain runs to 261 residues: Hydroxyethylthiazole kinase (261 aa).

Met38 provides a ligand contact to substrate. Residues Arg114 and Thr159 each coordinate ATP. Gly186 is a substrate binding site.

The protein belongs to the Thz kinase family. The cofactor is Mg(2+).

The enzyme catalyses 5-(2-hydroxyethyl)-4-methylthiazole + ATP = 4-methyl-5-(2-phosphooxyethyl)-thiazole + ADP + H(+). Its pathway is cofactor biosynthesis; thiamine diphosphate biosynthesis; 4-methyl-5-(2-phosphoethyl)-thiazole from 5-(2-hydroxyethyl)-4-methylthiazole: step 1/1. Its function is as follows. Catalyzes the phosphorylation of the hydroxyl group of 4-methyl-5-beta-hydroxyethylthiazole (THZ). This Streptococcus suis (strain 05ZYH33) protein is Hydroxyethylthiazole kinase.